Here is a 358-residue protein sequence, read N- to C-terminus: Holliday junction branch migration complex subunit RuvB (358 aa).

The tract at residues 1 to 24 is disordered; the sequence is MAIKRSHNSPPATEENLLTPNPTI. Residues 8–22 are compositionally biased toward polar residues; that stretch reads NSPPATEENLLTPNP. The segment at 13 to 195 is large ATPase domain (RuvB-L); sequence TEENLLTPNP…FGLIQRLRFY (183 aa). ATP is bound by residues isoleucine 34, arginine 35, glycine 76, lysine 79, threonine 80, threonine 81, 142 to 144, arginine 185, tyrosine 195, and arginine 232; that span reads EDY. Threonine 80 is a binding site for Mg(2+). Residues 196–266 are small ATPAse domain (RuvB-S); the sequence is AVEELTAIIL…LAAEGLNQLN (71 aa). The interval 269–358 is head domain (RuvB-H); the sequence is SMGLDWTDRL…KDRSLPLFEF (90 aa). The DNA site is built by arginine 324 and arginine 329.

It belongs to the RuvB family. Homohexamer. Forms an RuvA(8)-RuvB(12)-Holliday junction (HJ) complex. HJ DNA is sandwiched between 2 RuvA tetramers; dsDNA enters through RuvA and exits via RuvB. An RuvB hexamer assembles on each DNA strand where it exits the tetramer. Each RuvB hexamer is contacted by two RuvA subunits (via domain III) on 2 adjacent RuvB subunits; this complex drives branch migration. In the full resolvosome a probable DNA-RuvA(4)-RuvB(12)-RuvC(2) complex forms which resolves the HJ.

It localises to the cytoplasm. It carries out the reaction ATP + H2O = ADP + phosphate + H(+). In terms of biological role, the RuvA-RuvB-RuvC complex processes Holliday junction (HJ) DNA during genetic recombination and DNA repair, while the RuvA-RuvB complex plays an important role in the rescue of blocked DNA replication forks via replication fork reversal (RFR). RuvA specifically binds to HJ cruciform DNA, conferring on it an open structure. The RuvB hexamer acts as an ATP-dependent pump, pulling dsDNA into and through the RuvAB complex. RuvB forms 2 homohexamers on either side of HJ DNA bound by 1 or 2 RuvA tetramers; 4 subunits per hexamer contact DNA at a time. Coordinated motions by a converter formed by DNA-disengaged RuvB subunits stimulates ATP hydrolysis and nucleotide exchange. Immobilization of the converter enables RuvB to convert the ATP-contained energy into a lever motion, pulling 2 nucleotides of DNA out of the RuvA tetramer per ATP hydrolyzed, thus driving DNA branch migration. The RuvB motors rotate together with the DNA substrate, which together with the progressing nucleotide cycle form the mechanistic basis for DNA recombination by continuous HJ branch migration. Branch migration allows RuvC to scan DNA until it finds its consensus sequence, where it cleaves and resolves cruciform DNA. The protein is Holliday junction branch migration complex subunit RuvB of Microcystis aeruginosa (strain NIES-843 / IAM M-2473).